The chain runs to 667 residues: MNGSGSTAKESLFNPTPRKLGLPEDNTMTPYNGVRSIFDNSSGSRQLTDEHTNQERAISKAKLADENIAPFLAKHIPSQYAPLGADASKTTGPPRPMNSRYCYRHRPDLKCRRQADEPSMDHLQWELQSLSQSDQQGIAHVWSLFSAAPAKQRELMLRGILAQCCFPQLSLISSSVRDLIRIDFITALPPEISFKILSYLDTASLCRAAQVSRAWKCLADDDVVWHRMCEQHIHRKCTKCGWGLPLLERKRLRASKEQIEKRALGVSVAPDSSTIAVQTVDATSGVKRTAEDLEGSDSQVVKRQRLPTEDTELHRTNVRPWKDVYKDRFKVGTNWKYGRCSVKVFKGHTNGVMCLQFEDNILATGSYDMTIKIWDMETGEELRTLTGHTSGIRCLQFDDTKLISGSIDRTLKVWNWRTGECISTYTGHLGGIIGLHFENSVLASGSIDNTVKIWNFEDKSTFLLRGHSDWVNAVRVDSASRTVLSASDDCTVKLWDLDSKQCIRTFQGHVGQVQQVIPLPKEFEFEEDHDAGHEEDSNASVSGDESPLRQEPCSPGASFFEGDRPAPPRYILTSALDSTIRLWETYSGRCLRTFFGHLEGVWALSADTLRIVSGAEDRMVKIWDPRTGKCERTFTGHSGPVTCVGLGDSCFVTGSEDCEVRIHSFKN.

Residues 1-55 form a disordered region; sequence MNGSGSTAKESLFNPTPRKLGLPEDNTMTPYNGVRSIFDNSSGSRQLTDEHTNQE. The F-box domain maps to 182–228; that stretch reads IDFITALPPEISFKILSYLDTASLCRAAQVSRAWKCLADDDVVWHRM. WD repeat units follow at residues 347–386, 388–426, 428–464, 466–507, 549–593, 594–633, and 636–667; these read GHTN…RTLT, HTSG…STYT, HLGG…TFLL, GHSD…RTFQ, RQEP…CLRT, FFGH…CERT, and GHSG…SFKN. The segment at 528–562 is disordered; that stretch reads DHDAGHEEDSNASVSGDESPLRQEPCSPGASFFEG.

It belongs to the WD repeat MET30/SCONB/SCON-2 family. In terms of assembly, component of the SCF(sconB) E3 ubiquitin ligase complex.

The protein operates within protein modification; protein ubiquitination. Its function is as follows. Component of the SCF(sconB) E3 ubiquitin ligase complex involved in the regulation of sulfur metabolite repression, probably by mediating the inactivation or degradation of the metR transcription factor. This is Probable E3 ubiquitin ligase complex SCF subunit sconB (sconB) from Talaromyces stipitatus (strain ATCC 10500 / CBS 375.48 / QM 6759 / NRRL 1006) (Penicillium stipitatum).